The chain runs to 22 residues: Hemoglobinase-like protein 2 (22 aa).

It belongs to the peptidase C13 family.

The catalysed reaction is Hydrolysis of proteins and small molecule substrates at -Asn-|-Xaa- bonds.. The sequence is that of Hemoglobinase-like protein 2 from Fasciola hepatica (Liver fluke).